The chain runs to 176 residues: Translation initiation factor IF-3 (176 aa).

Belongs to the IF-3 family. Monomer.

It is found in the cytoplasm. Its function is as follows. IF-3 binds to the 30S ribosomal subunit and shifts the equilibrium between 70S ribosomes and their 50S and 30S subunits in favor of the free subunits, thus enhancing the availability of 30S subunits on which protein synthesis initiation begins. The chain is Translation initiation factor IF-3 from Streptococcus pyogenes serotype M4 (strain MGAS10750).